The chain runs to 411 residues: KIN17-like protein (411 aa).

A C2H2-type zinc finger spans residues 28–50 (CQMCQKQCRDENGFKCHCMSESH). Residues 51–160 (QRQMQVFGQN…KERLKNKRVK (110 aa)) form a winged helix-turn-helix (wHTH) region. Residues 147–183 (ETLFKERLKNKRVKSDLAEEEKQEREIQRQIERAAEK) adopt a coiled-coil conformation. Disordered regions lie at residues 182–211 (EKLNGGGGEGETSGNDEVVDDGDDERKKDE) and 232–286 (VATG…EEEK). The segment covering 253 to 286 (KVERGEKRKRSGDSGRSEKERRSALDELMKEEEK) has biased composition (basic and acidic residues). Residues 259 to 262 (KRKR) carry the Nuclear localization signal (NLS) motif. The stretch at 265-294 (DSGRSEKERRSALDELMKEEEKKKERMNRK) forms a coiled coil. The segment at 301-352 (GIIVKVMSKALAEKGYYKQKGVVKKVIDNYVGEIKMLDSKHVLRVDQKELET) is C-terminal subdomain A. A C-terminal subdomain B region spans residues 358 to 409 (GGMVKIVNGAYRGSNARLLGVDTEKFCAKVQIEKGVYDGRVIKSIEYEDICK).

Belongs to the KIN17 family. As to quaternary structure, interacts with SPL7. Expressed in root vasculature, lateral roots, cotyledons, rosette leaves, cauline leaves, stems, sepals, style of pistils, mature pollen grains and siliques.

It is found in the nucleus speckle. Its function is as follows. Promotes the copper deficiency response by direct interaction with SPL7. Acts with SPL7 in a common pathway to promote copper-responsive genes and alleviate oxidative stress during copper-limiting periods. May promote SPL7 function when copper is limiting. Participates in the control of general plant growth and development, and in the response to counteract the negative effects of UV radiation. The chain is KIN17-like protein from Arabidopsis thaliana (Mouse-ear cress).